Here is a 62-residue protein sequence, read N- to C-terminus: Photosystem II reaction center protein Z (62 aa).

2 consecutive transmembrane segments (helical) span residues 8-28 (AVFASIAIPFIPVIGVPAVFA) and 41-61 (FSGATPRIGPVPLVGILNSSV).

This sequence belongs to the PsbZ family. In terms of assembly, PSII is composed of 1 copy each of membrane proteins PsbA, PsbB, PsbC, PsbD, PsbE, PsbF, PsbH, PsbI, PsbJ, PsbK, PsbL, PsbM, PsbT, PsbY, PsbZ, Psb30/Ycf12, at least 3 peripheral proteins of the oxygen-evolving complex and a large number of cofactors. It forms dimeric complexes.

The protein resides in the plastid. The protein localises to the chloroplast thylakoid membrane. In terms of biological role, may control the interaction of photosystem II (PSII) cores with the light-harvesting antenna, regulates electron flow through the 2 photosystem reaction centers. PSII is a light-driven water plastoquinone oxidoreductase, using light energy to abstract electrons from H(2)O, generating a proton gradient subsequently used for ATP formation. This is Photosystem II reaction center protein Z from Selaginella uncinata (Blue spike-moss).